A 155-amino-acid chain; its full sequence is Endoribonuclease YbeY (155 aa).

Zn(2+) is bound by residues histidine 110, histidine 114, and histidine 120.

It belongs to the endoribonuclease YbeY family. Zn(2+) is required as a cofactor.

The protein localises to the cytoplasm. Its function is as follows. Single strand-specific metallo-endoribonuclease involved in late-stage 70S ribosome quality control and in maturation of the 3' terminus of the 16S rRNA. This chain is Endoribonuclease YbeY, found in Deinococcus geothermalis (strain DSM 11300 / CIP 105573 / AG-3a).